The sequence spans 637 residues: Chaperone protein DnaK (637 aa).

Residue threonine 196 is modified to Phosphothreonine; by autocatalysis. Disordered stretches follow at residues 503 to 525 (AEIN…RKEE) and 598 to 637 (SGAG…DDKK). Positions 598–619 (SGAGAAQAQPEAPQNSGSSQSS) are enriched in low complexity.

This sequence belongs to the heat shock protein 70 family.

Functionally, acts as a chaperone. The chain is Chaperone protein DnaK from Chlorobium chlorochromatii (strain CaD3).